We begin with the raw amino-acid sequence, 119 residues long: Large ribosomal subunit protein bL20 (119 aa).

Belongs to the bacterial ribosomal protein bL20 family.

Its function is as follows. Binds directly to 23S ribosomal RNA and is necessary for the in vitro assembly process of the 50S ribosomal subunit. It is not involved in the protein synthesizing functions of that subunit. The protein is Large ribosomal subunit protein bL20 of Bacillus pumilus (strain SAFR-032).